A 460-amino-acid polypeptide reads, in one-letter code: Orexin receptor type 2 (460 aa).

Topologically, residues 1 to 54 are extracellular; the sequence is MSSTKLEDSLSRRNWSSASELNETQEPFLNPTDYDDEEFLRYLWREYLHPKEYE. Asn14 and Asn22 each carry an N-linked (GlcNAc...) asparagine glycan. The interval 33–49 is required for response to orexin-A; sequence DYDDEEFLRYLWREYLH. The chain crosses the membrane as a helical span at residues 55–75; the sequence is WVLIAGYIIVFVVALIGNVLV. The Cytoplasmic segment spans residues 76–88; that stretch reads CVAVWKNHHMRTV. The chain crosses the membrane as a helical span at residues 89 to 110; it reads TNYFIVNLSLADVLVTITCLPA. The Extracellular portion of the chain corresponds to 111–127; the sequence is TLVVDITETWFFGQSLC. A disulfide bond links Cys127 and Cys210. Residues 128-150 traverse the membrane as a helical segment; it reads KVIPYLQTVSVSVSVLTLSCIAL. The Cytoplasmic portion of the chain corresponds to 151 to 170; the sequence is DRWYAICHPLMFKSTAKRAR. A helical transmembrane segment spans residues 171–191; the sequence is NSIVVIWIVSCIIMIPQAIVM. At 192 to 222 the chain is on the extracellular side; the sequence is ECSSMLPGLANKTTLFTVCDEHWGGEVYPKM. Residue Asn202 is glycosylated (N-linked (GlcNAc...) asparagine). A helical membrane pass occupies residues 223 to 243; it reads YHICFFLVTYMAPLCLMILAY. The Cytoplasmic segment spans residues 244-304; that stretch reads LQIFRKLWCR…QIRARRKTAR (61 aa). The chain crosses the membrane as a helical span at residues 305–326; the sequence is MLMVVLLVFAICYLPISILNVL. Topologically, residues 327–342 are extracellular; it reads KRVFGMFTHTEDRETV. Residues 343–366 form a helical membrane-spanning segment; that stretch reads YAWFTFSHWLVYANSAANPIIYNF. At 367 to 460 the chain is on the cytoplasmic side; that stretch reads LSGKFREEFK…SSLLSTWLEV (94 aa).

This sequence belongs to the G-protein coupled receptor 1 family. In terms of tissue distribution, widely expressed. Isoform 2 not detected in skeletal muscle and kidney.

It localises to the cell membrane. Nonselective, high-affinity receptor for both orexin-A and orexin-B neuropeptides. Triggers an increase in cytoplasmic Ca(2+) levels in response to orexin-A binding. This is Orexin receptor type 2 (Hcrtr2) from Mus musculus (Mouse).